We begin with the raw amino-acid sequence, 397 residues long: Phosphoglycerate kinase (397 aa).

Residues 25–27, R41, 64–67, R118, and R151 each bind substrate; these read DLN and HLGR. ATP is bound by residues K202, E324, and 350 to 353; that span reads GGDT.

Belongs to the phosphoglycerate kinase family. In terms of assembly, monomer.

It localises to the cytoplasm. It catalyses the reaction (2R)-3-phosphoglycerate + ATP = (2R)-3-phospho-glyceroyl phosphate + ADP. Its pathway is carbohydrate degradation; glycolysis; pyruvate from D-glyceraldehyde 3-phosphate: step 2/5. The sequence is that of Phosphoglycerate kinase from Albidiferax ferrireducens (strain ATCC BAA-621 / DSM 15236 / T118) (Rhodoferax ferrireducens).